The following is a 442-amino-acid chain: Kelch domain-containing protein 10 (442 aa).

The interval 1–57 (MSAAQGWDRNRRRGGGAAGAGGGGSGAGGGSGGSGGRGTGQLNRFVQLSGRPHLPGK) is disordered. The residue at position 13 (arginine 13) is an Omega-N-methylarginine. A compositionally biased stretch (gly residues) spans 15-39 (GGAAGAGGGGSGAGGGSGGSGGRGT). Kelch repeat units follow at residues 87–154 (RPPP…PREL), 155–198 (ASMS…ALLS), 199–260 (CRGK…PEER), 261–319 (YRHE…RRCH), 320–364 (SCVQ…PEPV), and 365–403 (YFHCAAVTPAGCMYIHGGVVNIHENKRTGSLFKIWLVVP). The segment at 401-442 (VVPSLLELAWEKLLAAFPNLANLSRTQLLHLGLTQGLIERLK) is interaction with CUL2.

The protein belongs to the KLHDC10 family. As to quaternary structure, component of a CRL2 E3 ubiquitin-protein ligase complex, also named ECS (Elongin BC-CUL2/5-SOCS-box protein) complex, composed of CUL2, Elongin BC (ELOB and ELOC), RBX1 and substrate-specific adapter KLHDC10. Interacts (via the 6 Kelch repeats) with PPP5C.

It localises to the nucleus. It is found in the cytoplasm. Its pathway is protein modification; protein ubiquitination. Its function is as follows. Substrate-recognition component of a Cul2-RING (CRL2) E3 ubiquitin-protein ligase complex of the DesCEND (destruction via C-end degrons) pathway, which recognizes a C-degron located at the extreme C-terminus of target proteins, leading to their ubiquitination and degradation. The C-degron recognized by the DesCEND pathway is usually a motif of less than ten residues and can be present in full-length proteins, truncated proteins or proteolytically cleaved forms. The CRL2(KLHDC10) complex specifically recognizes proteins with a proline-glycine (Pro-Gly) or an alanine tail (CAT tail) at the C-terminus, leading to their ubiquitination and degradation. The CRL2(KLHDC10) complex is involved in the ribosome-associated quality control (RQC) pathway, which mediates the extraction of incompletely synthesized nascent chains from stalled ribosomes: CRL2(KLHDC10) acts downstream of NEMF and recognizes CAT tails associated with stalled nascent chains, leading to their ubiquitination and degradation. Participates in the oxidative stress-induced cell death through MAP3K5 activation. Inhibits PPP5C phosphatase activity on MAP3K5. Acts as a regulator of necroptosis. The protein is Kelch domain-containing protein 10 of Homo sapiens (Human).